The following is a 172-amino-acid chain: Peptidyl-prolyl cis-trans isomerase (172 aa).

The PPIase cyclophilin-type domain maps to 10 to 168 (YFDVYANEES…YRIEIRDCGV (159 aa)).

Belongs to the cyclophilin-type PPIase family.

The protein resides in the cytoplasm. It catalyses the reaction [protein]-peptidylproline (omega=180) = [protein]-peptidylproline (omega=0). Its function is as follows. PPIases accelerate the folding of proteins. They catalyze the cis-trans isomerization of proline imidic peptide bonds in oligopeptides. The sequence is that of Peptidyl-prolyl cis-trans isomerase (CPR1) from Encephalitozoon cuniculi (strain GB-M1) (Microsporidian parasite).